The sequence spans 493 residues: Cytochrome P450 2W1 (493 aa).

An N-terminal signal peptide occupies residues 1-23 (MALLLLGVWGILLLLGLWGLLQG). Residue Asn-180 is glycosylated (N-linked (GlcNAc...) asparagine). Cys-436 provides a ligand contact to heme.

This sequence belongs to the cytochrome P450 family. It depends on heme as a cofactor. In terms of tissue distribution, detected in colon, ileum, and testes.

Its subcellular location is the endoplasmic reticulum lumen. The protein localises to the cell membrane. The protein resides in the microsome membrane. It carries out the reaction all-trans-retinoate + reduced [NADPH--hemoprotein reductase] + O2 = all-trans-4-hydroxyretinoate + oxidized [NADPH--hemoprotein reductase] + H2O + H(+). The enzyme catalyses 1-(9Z-octadecenoyl)-sn-glycero-3-phosphocholine + reduced [NADPH--hemoprotein reductase] + O2 = 1-[8-hydroxy-(9Z)-octadecenoyl]-sn-glycero-3-phosphocholine + oxidized [NADPH--hemoprotein reductase] + H2O + H(+). The catalysed reaction is 1-(9Z-octadecenoyl)-sn-glycero-3-phosphocholine + reduced [NADPH--hemoprotein reductase] + O2 = 1-[11-hydroxy-(9Z)-octadecenoyl]-sn-glycero-3-phosphocholine + oxidized [NADPH--hemoprotein reductase] + H2O + H(+). It catalyses the reaction 1-(9Z-octadecenoyl)-sn-glycero-3-phosphocholine + reduced [NADPH--hemoprotein reductase] + O2 = 1-[(9S,10R)-epoxy-octadecanoyl]-sn-glycero-3-phosphocholine + oxidized [NADPH--hemoprotein reductase] + H2O + H(+). It carries out the reaction 1-(9Z-octadecenoyl)-sn-glycero-3-phosphocholine + reduced [NADPH--hemoprotein reductase] + O2 = 1-[(9R,10S)-epoxy-octadecanoyl]-sn-glycero-3-phosphocholine + oxidized [NADPH--hemoprotein reductase] + H2O + H(+). A cytochrome P450 monooxygenase that may play a role in retinoid and phospholipid metabolism. Catalyzes the hydroxylation of saturated carbon hydrogen bonds. Hydroxylates all trans-retinoic acid (atRA) to 4-hydroxyretinoate and may regulate atRA clearance. Other retinoids such as all-trans retinol and all-trans retinal are potential endogenous substrates. Catalyzes both epoxidation of double bonds and hydroxylation of carbon hydrogen bonds of the fatty acyl chain of 1-acylphospholipids/2-lysophospholipids. Can metabolize various lysophospholipids classes including lysophosphatidylcholines (LPCs), lysophosphatidylinositols (LPIs), lysophosphatidylserines (LPSs), lysophosphatidylglycerols (LPGs), lysophosphatidylethanolamines (LPEs) and lysophosphatidic acids (LPAs). Has low or no activity toward 2-acylphospholipids/1-lysophospholipids, diacylphospholipids and free fatty acids. May play a role in tumorigenesis by activating procarcinogens such as aflatoxin B1, polycyclic aromatic hydrocarbon dihydrodiols and aromatic amines. Mechanistically, uses molecular oxygen inserting one oxygen atom into a substrate, and reducing the second into a water molecule, with two electrons provided by NADPH via cytochrome P450 reductase (CPR; NADPH-ferrihemoprotein reductase). The chain is Cytochrome P450 2W1 (Cyp2w1) from Mus musculus (Mouse).